The sequence spans 182 residues: MRPPEIPEGHADTSGQFLVAHPKMPANIFAHSVIYVVSHNADGAMGLIVNRLAGAGPLGKLLEAFGLASKAQREIKLYLGGPVGIGQGFVLHSDDYAGASTRALKKGLSLSTGLDVLEAIARGRGPRQVRMLFGYAGWSPGQLDGEIARGDWLLAPADTSLIFSEEPDKVWEEALKHAGLPL.

It belongs to the UPF0301 (AlgH) family.

The chain is UPF0301 protein MCA0413 1 from Methylococcus capsulatus (strain ATCC 33009 / NCIMB 11132 / Bath).